A 355-amino-acid chain; its full sequence is Tetraacyldisaccharide 4'-kinase (355 aa).

49–56 provides a ligand contact to ATP; the sequence is TAGGTGKT.

The protein belongs to the LpxK family.

The enzyme catalyses a lipid A disaccharide + ATP = a lipid IVA + ADP + H(+). Its pathway is glycolipid biosynthesis; lipid IV(A) biosynthesis; lipid IV(A) from (3R)-3-hydroxytetradecanoyl-[acyl-carrier-protein] and UDP-N-acetyl-alpha-D-glucosamine: step 6/6. In terms of biological role, transfers the gamma-phosphate of ATP to the 4'-position of a tetraacyldisaccharide 1-phosphate intermediate (termed DS-1-P) to form tetraacyldisaccharide 1,4'-bis-phosphate (lipid IVA). The sequence is that of Tetraacyldisaccharide 4'-kinase from Chlorobium luteolum (strain DSM 273 / BCRC 81028 / 2530) (Pelodictyon luteolum).